The sequence spans 1388 residues: DNA-directed RNA polymerase subunit beta'' (1388 aa).

Residues C224, C294, C301, and C304 each coordinate Zn(2+).

It belongs to the RNA polymerase beta' chain family. RpoC2 subfamily. As to quaternary structure, in plastids the minimal PEP RNA polymerase catalytic core is composed of four subunits: alpha, beta, beta', and beta''. When a (nuclear-encoded) sigma factor is associated with the core the holoenzyme is formed, which can initiate transcription. Requires Zn(2+) as cofactor.

Its subcellular location is the plastid. It localises to the chloroplast. The catalysed reaction is RNA(n) + a ribonucleoside 5'-triphosphate = RNA(n+1) + diphosphate. In terms of biological role, DNA-dependent RNA polymerase catalyzes the transcription of DNA into RNA using the four ribonucleoside triphosphates as substrates. The chain is DNA-directed RNA polymerase subunit beta'' from Phalaenopsis aphrodite subsp. formosana (Moth orchid).